A 326-amino-acid chain; its full sequence is Transposase InsH for insertion sequence element IS5H (326 aa).

This sequence belongs to the transposase 11 family.

Its function is as follows. Involved in the transposition of the insertion sequence IS5. In Escherichia coli (strain K12), this protein is Transposase InsH for insertion sequence element IS5H (insH6).